Reading from the N-terminus, the 233-residue chain is Leucyl/phenylalanyl-tRNA--protein transferase (233 aa).

This sequence belongs to the L/F-transferase family.

The protein localises to the cytoplasm. The catalysed reaction is N-terminal L-lysyl-[protein] + L-leucyl-tRNA(Leu) = N-terminal L-leucyl-L-lysyl-[protein] + tRNA(Leu) + H(+). It carries out the reaction N-terminal L-arginyl-[protein] + L-leucyl-tRNA(Leu) = N-terminal L-leucyl-L-arginyl-[protein] + tRNA(Leu) + H(+). The enzyme catalyses L-phenylalanyl-tRNA(Phe) + an N-terminal L-alpha-aminoacyl-[protein] = an N-terminal L-phenylalanyl-L-alpha-aminoacyl-[protein] + tRNA(Phe). Functions in the N-end rule pathway of protein degradation where it conjugates Leu, Phe and, less efficiently, Met from aminoacyl-tRNAs to the N-termini of proteins containing an N-terminal arginine or lysine. The polypeptide is Leucyl/phenylalanyl-tRNA--protein transferase (Desulfatibacillum aliphaticivorans).